A 186-amino-acid polypeptide reads, in one-letter code: Elongation factor P (186 aa).

The protein belongs to the elongation factor P family.

The protein resides in the cytoplasm. It participates in protein biosynthesis; polypeptide chain elongation. Its function is as follows. Involved in peptide bond synthesis. Stimulates efficient translation and peptide-bond synthesis on native or reconstituted 70S ribosomes in vitro. Probably functions indirectly by altering the affinity of the ribosome for aminoacyl-tRNA, thus increasing their reactivity as acceptors for peptidyl transferase. This Neisseria meningitidis serogroup A / serotype 4A (strain DSM 15465 / Z2491) protein is Elongation factor P.